A 192-amino-acid chain; its full sequence is MYIVFEGIDGAGKSTQINLLKDWLDQNGFDVETVVEPTDSEVGKLIRKILQRPDATTDRIQKTLGLLFAADRMLIMDKLNDDSKVILSDRSFISSLAYQEPAEWIEQINKYAKEPDLVLLLDVDVKTSVNRCSKEDEFENEEFLSKVKANYLDLISNFNHEIIDASTGVNKVSTDIKKAVAPYMGICPDCIR.

7 to 14 (GIDGAGKS) provides a ligand contact to ATP.

This sequence belongs to the thymidylate kinase family.

It carries out the reaction dTMP + ATP = dTDP + ADP. This chain is Probable thymidylate kinase, found in Methanobrevibacter smithii (strain ATCC 35061 / DSM 861 / OCM 144 / PS).